A 124-amino-acid chain; its full sequence is Apolipoprotein C-IV (124 aa).

The first 27 residues, 1 to 27 (MLLPRRGLRTLPSLCLYILVLVWVVAC), serve as a signal peptide directing secretion.

This sequence belongs to the apolipoprotein C4 family. Glycosylated; contains sialic acid. Present in up to five sialylated isoforms. In terms of tissue distribution, blood plasma, associated primarily with VLDL and HDL. Expressed mainly in the liver.

It is found in the secreted. Functionally, may participate in lipoprotein metabolism. The chain is Apolipoprotein C-IV (APOC4) from Oryctolagus cuniculus (Rabbit).